Reading from the N-terminus, the 256-residue chain is Cilia- and flagella-associated protein 410 (256 aa).

LRR repeat units follow at residues 19 to 40 (SVRKLNCWGSRLTDISICQEMP), 41 to 62 (SLEVITLSVNSISTLEPVSRCQ), and 63 to 84 (RLSELYLRRNRIPSLAELFYLK). The 41-residue stretch at 97-137 (NPCCGTSPHRYRMTVLRTLPRLQKLDNQAVTEEELSRALSE) folds into the LRRCT domain. 2 disordered regions span residues 129-156 (EELSRALSEGEEITAAPEREGTGHGGPK) and 168-212 (AETG…SSHR). Residues Ser136 and Ser177 each carry the phosphoserine modification.

In terms of assembly, found in a complex with CFAP410, NEK1 and SPATA7. Interacts with NEK1. As to expression, widely expressed. Expressed in the retina.

It is found in the mitochondrion. It localises to the cytoplasm. The protein resides in the cytoskeleton. Its subcellular location is the cilium basal body. The protein localises to the cell projection. It is found in the cilium. It localises to the photoreceptor outer segment. Its function is as follows. Plays a role in cilia formation and/or maintenance. Plays a role in the regulation of cell morphology and cytoskeletal organization. Involved in DNA damage repair. This chain is Cilia- and flagella-associated protein 410, found in Homo sapiens (Human).